A 56-amino-acid chain; its full sequence is Large ribosomal subunit protein bL32 (56 aa).

The span at 1 to 16 shows a compositional bias: basic residues; the sequence is MAVQKNRKTRSKRGMR. The segment at 1–37 is disordered; the sequence is MAVQKNRKTRSKRGMRRSHDALGTATMSVDSTSGETH. Polar residues predominate over residues 25-35; it reads ATMSVDSTSGE.

The protein belongs to the bacterial ribosomal protein bL32 family.

This Pseudoalteromonas atlantica (strain T6c / ATCC BAA-1087) protein is Large ribosomal subunit protein bL32.